The chain runs to 424 residues: MQSLTPSSGVNLKSIIRKTSLPPGQTRFITGRVIKCGYQVDSANTVNTAGAPASYNSGHVGASRADWQSSCAILASKVVSQQPDTEKTGGAGNITAVNGHKTLDLVSIDNLPKALTITDLSPAPMHGSTLRVAYQGVPGAYSEAAAGKAYPNCEAIPCDQFEVAFQAVELWIADRAVLPVENSLGGSIHRNYDLLLRHRLHIVGEVQLPVHHCLLALPGVRKEYLTRVISHPQALAQCELTITKLGLNVAREAVDDTAGAAEYIAANNLRDTAAVASARAAELYGLQILAEGIQDDSSNVTRFVMLAREPIIPRMDRPFKTSIVFAHEGTGVLFKVLSAFAFRNISLTKIESRPHRNRPIRLVDDANVGTAKHFEYMFYVDFDASMADVRAQNALAEVQEFTSFLRVLGSYPMDMTPCCPSRDE.

A chloroplast-targeting transit peptide spans 1 to 52 (MQSLTPSSGVNLKSIIRKTSLPPGQTRFITGRVIKCGYQVDSANTVNTAGAP). The Prephenate dehydratase domain occupies 131–308 (RVAYQGVPGA…NVTRFVMLAR (178 aa)). In terms of domain architecture, ACT spans 321–412 (TSIVFAHEGT…SFLRVLGSYP (92 aa)).

Mostly expressed in flowers, especially in petals (corollas and tubes), and, at low levels, in roots, stems, leaves, pistils, stamens, ovaries and sepals.

The protein localises to the plastid. Its subcellular location is the chloroplast stroma. It carries out the reaction L-arogenate + H(+) = L-phenylalanine + CO2 + H2O. The protein operates within amino-acid biosynthesis; L-phenylalanine biosynthesis; L-phenylalanine from L-arogenate: step 1/1. Converts L-arogenate produced from the shikimate-chorismate pathway into phenylalanine (Phe). Involved in floral volatile benzenoids and phenylpropanoids (FVBP) production. The chain is Arogenate dehydratase 1 from Petunia hybrida (Petunia).